The chain runs to 137 residues: MRNFDLSPLYRSAIGFDRLFNHLENNQSQSNGGYPPYNVELVDENHYRIAIAVAGFAESELEITAQDNLLVVKGAHADEQKERTYLYQGIAERNFERKFQLAENIHVRGANLVNGLLYIDLERVIPEAKKPRRIEIN.

Residues 28 to 137 (SQSNGGYPPY…AKKPRRIEIN (110 aa)) enclose the sHSP domain.

It belongs to the small heat shock protein (HSP20) family. As to quaternary structure, monomer. Forms homomultimers of about 100-150 subunits at optimal growth temperatures. Conformation changes to monomers at high temperatures or high ionic concentrations.

The protein localises to the cytoplasm. Its function is as follows. Associates with aggregated proteins, together with IbpB, to stabilize and protect them from irreversible denaturation and extensive proteolysis during heat shock and oxidative stress. Aggregated proteins bound to the IbpAB complex are more efficiently refolded and reactivated by the ATP-dependent chaperone systems ClpB and DnaK/DnaJ/GrpE. Its activity is ATP-independent. This is Small heat shock protein IbpA from Shigella sonnei (strain Ss046).